The primary structure comprises 340 residues: Ketol-acid reductoisomerase (NADP(+)) (340 aa).

The KARI N-terminal Rossmann domain maps to 1 to 182 (MRVYYDRDCD…GGGRSGIIET (182 aa)). NADP(+) is bound by residues 24-27 (YGSQ), Arg-48, Ser-51, Ser-53, and 83-86 (DELQ). His-108 is a catalytic residue. An NADP(+)-binding site is contributed by Gly-134. The region spanning 183–329 (NFREECETDL…KELRGMMPWI (147 aa)) is the KARI C-terminal knotted domain. The Mg(2+) site is built by Asp-191, Glu-195, Glu-227, and Glu-231. Ser-252 is a substrate binding site.

It belongs to the ketol-acid reductoisomerase family. It depends on Mg(2+) as a cofactor.

The enzyme catalyses (2R)-2,3-dihydroxy-3-methylbutanoate + NADP(+) = (2S)-2-acetolactate + NADPH + H(+). The catalysed reaction is (2R,3R)-2,3-dihydroxy-3-methylpentanoate + NADP(+) = (S)-2-ethyl-2-hydroxy-3-oxobutanoate + NADPH + H(+). It participates in amino-acid biosynthesis; L-isoleucine biosynthesis; L-isoleucine from 2-oxobutanoate: step 2/4. Its pathway is amino-acid biosynthesis; L-valine biosynthesis; L-valine from pyruvate: step 2/4. Its function is as follows. Involved in the biosynthesis of branched-chain amino acids (BCAA). Catalyzes an alkyl-migration followed by a ketol-acid reduction of (S)-2-acetolactate (S2AL) to yield (R)-2,3-dihydroxy-isovalerate. In the isomerase reaction, S2AL is rearranged via a Mg-dependent methyl migration to produce 3-hydroxy-3-methyl-2-ketobutyrate (HMKB). In the reductase reaction, this 2-ketoacid undergoes a metal-dependent reduction by NADPH to yield (R)-2,3-dihydroxy-isovalerate. The protein is Ketol-acid reductoisomerase (NADP(+)) of Dinoroseobacter shibae (strain DSM 16493 / NCIMB 14021 / DFL 12).